The following is a 592-amino-acid chain: Calnexin (592 aa).

Positions 1–20 (MEGKWLLCMLLVLGTAIVEA) are cleaved as a signal peptide. Over 21-481 (HDGHDDDVID…QMIEAAEERP (461 aa)) the chain is Lumenal. The Ca(2+) site is built by Ser-74 and Asp-117. An N6-acetyllysine modification is found at Lys-137. A disulfide bridge connects residues Cys-160 and Cys-194. Tyr-164, Lys-166, Tyr-185, and Asp-192 together coordinate an alpha-D-glucoside. Residues 260–345 (GNLLNDMTPP…AEKPEDWDED (86 aa)) are disordered. Residues 274–319 (REIEDPEDRKPEDWDERPKIPDPEAVKPDDWDEDAPAKIPDEEATK) show a composition bias toward basic and acidic residues. Residues 276–409 (IEDPEDRKPE…RKIPNPDFFE (134 aa)) are p domain (Extended arm). A run of 5 repeats spans residues 278 to 290 (DPEDRKPEDWDER), 295 to 307 (DPEAVKPDDWDED), 314 to 326 (DEEATKPEGWLDD), 333 to 345 (DPDAEKPEDWDED), and 348 to 358 (GEWEAPQIANP). 4 X approximate repeats regions lie at residues 278–345 (DPED…WDED) and 348–405 (GEWE…IPNP). Positions 323–345 (WLDDEPEYVPDPDAEKPEDWDED) are enriched in acidic residues. The segment at 326–359 (DEPEYVPDPDAEKPEDWDEDMDGEWEAPQIANPR) is interaction with PPIB. Cys-360 and Cys-366 are oxidised to a cystine. 3 repeat units span residues 367 to 377 (GVWQRPVIDNP), 381 to 391 (GKWKPPMIDNP), and 395 to 405 (GIWKPRKIPNP). Glu-425 serves as a coordination point for an alpha-D-glucoside. Asp-436 serves as a coordination point for Ca(2+). Residues 482-502 (WLWVVYILTVALPVFLVILFC) form a helical membrane-spanning segment. 2 S-palmitoyl cysteine lipidation sites follow: Cys-502 and Cys-503. Over 503 to 592 (CSGKKQTSGM…SPRNRKPRRE (90 aa)) the chain is Cytoplasmic. A sufficient to mediate interaction with SGIP1 region spans residues 503–592 (CSGKKQTSGM…SPRNRKPRRE (90 aa)). Positions 511–592 (GMEYKKTDAP…SPRNRKPRRE (82 aa)) are disordered. A compositionally biased stretch (acidic residues) spans 525 to 547 (KEEEEEKEEEKDKGDEEEEGEEK). The residue at position 554 (Ser-554) is a Phosphoserine. A Phosphothreonine modification is found at Thr-562. Ser-564 is modified (phosphoserine; by MAPK3). Position 583 is a phosphoserine (Ser-583).

The protein belongs to the calreticulin family. In terms of assembly, interacts with MAPK3/ERK1. Interacts with KCNH2. Associates with ribosomes. Interacts with SGIP1; involved in negative regulation of endocytosis. The palmitoylated form interacts with the ribosome-translocon complex component SSR1, promoting efficient folding of glycoproteins. Interacts with SERPINA2P/SERPINA2 and with the S and Z variants of SERPINA1. Interacts with PPIB. Interacts with ZNRF4. Interacts with SMIM22. Interacts with TMX2. Interacts with TMEM35A/NACHO. Interacts with CHRNA7. Interacts with reticulophagy regulators RETREG2 and RETREG3. Interacts with DNM1L; may form part of a larger protein complex at the ER-mitochondrial interface during mitochondrial fission. Interacts with ADAM7. As to quaternary structure, (Microbial infection) Interacts with HBV large envelope protein, isoform L. (Microbial infection) Interacts with HBV large envelope protein, isoform M; this association may be essential for isoform M proper secretion. Phosphorylated at Ser-564 by MAPK3/ERK1. Phosphorylation by MAPK3/ERK1 increases its association with ribosomes. In terms of processing, palmitoylation by DHHC6 leads to the preferential localization to the perinuclear rough ER. It mediates the association of calnexin with the ribosome-translocon complex (RTC) which is required for efficient folding of glycosylated proteins. Post-translationally, ubiquitinated, leading to proteasomal degradation. Probably ubiquitinated by ZNRF4.

The protein localises to the endoplasmic reticulum membrane. Its subcellular location is the mitochondrion membrane. It localises to the melanosome membrane. Functionally, calcium-binding protein that interacts with newly synthesized monoglucosylated glycoproteins in the endoplasmic reticulum. It may act in assisting protein assembly and/or in the retention within the ER of unassembled protein subunits. It seems to play a major role in the quality control apparatus of the ER by the retention of incorrectly folded proteins. Associated with partial T-cell antigen receptor complexes that escape the ER of immature thymocytes, it may function as a signaling complex regulating thymocyte maturation. Additionally it may play a role in receptor-mediated endocytosis at the synapse. The sequence is that of Calnexin (CANX) from Homo sapiens (Human).